The sequence spans 180 residues: Large ribosomal subunit protein uL5 (180 aa).

Belongs to the universal ribosomal protein uL5 family. In terms of assembly, part of the 50S ribosomal subunit; part of the 5S rRNA/L5/L18/L25 subcomplex. Contacts the 5S rRNA and the P site tRNA. Forms a bridge to the 30S subunit in the 70S ribosome.

This is one of the proteins that bind and probably mediate the attachment of the 5S RNA into the large ribosomal subunit, where it forms part of the central protuberance. In the 70S ribosome it contacts protein S13 of the 30S subunit (bridge B1b), connecting the 2 subunits; this bridge is implicated in subunit movement. Contacts the P site tRNA; the 5S rRNA and some of its associated proteins might help stabilize positioning of ribosome-bound tRNAs. This Chlamydia abortus (strain DSM 27085 / S26/3) (Chlamydophila abortus) protein is Large ribosomal subunit protein uL5.